Here is a 119-residue protein sequence, read N- to C-terminus: Protein MGF 110-13L-B (119 aa).

A signal peptide spans 1–16 (MKLLALLCILIWLSQP).

This sequence belongs to the asfivirus MGF 110 family.

This Ornithodoros (relapsing fever ticks) protein is Protein MGF 110-13L-B.